The chain runs to 1589 residues: Pentafunctional AROM polypeptide (1589 aa).

Residues Met-1–Asp-392 form a 3-dehydroquinate synthase region. Residues Asp-43–Asn-45, Glu-78–Lys-81, Gly-109–Ile-111, and Asp-114 contribute to the NAD(+) site. 7-phospho-2-dehydro-3-deoxy-D-arabino-heptonate is bound at residue Arg-125. NAD(+) is bound at residue Thr-134–Ser-135. 2 residues coordinate 7-phospho-2-dehydro-3-deoxy-D-arabino-heptonate: Asp-141 and Lys-147. Lys-156 contributes to the NAD(+) binding site. 7-phospho-2-dehydro-3-deoxy-D-arabino-heptonate is bound at residue Asn-157. NAD(+) contacts are provided by residues Trp-174 to Thr-177 and Asn-185. Glu-189 lines the Zn(2+) pocket. Residues Glu-189 to Lys-192 and Lys-258 contribute to the 7-phospho-2-dehydro-3-deoxy-D-arabino-heptonate site. The active-site Proton acceptor; for 3-dehydroquinate synthase activity is Glu-268. Residues Arg-272–Asn-276 and His-279 each bind 7-phospho-2-dehydro-3-deoxy-D-arabino-heptonate. His-279 provides a ligand contact to Zn(2+). Catalysis depends on His-283, which acts as the Proton acceptor; for 3-dehydroquinate synthase activity. His-295 and Lys-364 together coordinate 7-phospho-2-dehydro-3-deoxy-D-arabino-heptonate. Residue His-295 coordinates Zn(2+). The interval Val-405 to Ala-872 is EPSP synthase. The active-site For EPSP synthase activity is Cys-854. The tract at residues Ser-891 to Cys-1081 is shikimate kinase. Gly-896–Ser-903 lines the ATP pocket. The 3-dehydroquinase stretch occupies residues Leu-1082–Gln-1294. His-1199 serves as the catalytic Proton acceptor; for 3-dehydroquinate dehydratase activity. The Schiff-base intermediate with substrate; for 3-dehydroquinate dehydratase activity role is filled by Lys-1228. The segment at Ser-1307–Asp-1589 is shikimate dehydrogenase.

The protein in the N-terminal section; belongs to the sugar phosphate cyclases superfamily. Dehydroquinate synthase family. In the 2nd section; belongs to the EPSP synthase family. It in the 3rd section; belongs to the shikimate kinase family. This sequence in the 4th section; belongs to the type-I 3-dehydroquinase family. The protein in the C-terminal section; belongs to the shikimate dehydrogenase family. In terms of assembly, homodimer. Requires Zn(2+) as cofactor.

It localises to the cytoplasm. It catalyses the reaction 7-phospho-2-dehydro-3-deoxy-D-arabino-heptonate = 3-dehydroquinate + phosphate. It carries out the reaction 3-dehydroquinate = 3-dehydroshikimate + H2O. The catalysed reaction is shikimate + NADP(+) = 3-dehydroshikimate + NADPH + H(+). The enzyme catalyses shikimate + ATP = 3-phosphoshikimate + ADP + H(+). It catalyses the reaction 3-phosphoshikimate + phosphoenolpyruvate = 5-O-(1-carboxyvinyl)-3-phosphoshikimate + phosphate. The protein operates within metabolic intermediate biosynthesis; chorismate biosynthesis; chorismate from D-erythrose 4-phosphate and phosphoenolpyruvate: step 2/7. It participates in metabolic intermediate biosynthesis; chorismate biosynthesis; chorismate from D-erythrose 4-phosphate and phosphoenolpyruvate: step 3/7. It functions in the pathway metabolic intermediate biosynthesis; chorismate biosynthesis; chorismate from D-erythrose 4-phosphate and phosphoenolpyruvate: step 4/7. Its pathway is metabolic intermediate biosynthesis; chorismate biosynthesis; chorismate from D-erythrose 4-phosphate and phosphoenolpyruvate: step 5/7. The protein operates within metabolic intermediate biosynthesis; chorismate biosynthesis; chorismate from D-erythrose 4-phosphate and phosphoenolpyruvate: step 6/7. Its function is as follows. The AROM polypeptide catalyzes 5 consecutive enzymatic reactions in prechorismate polyaromatic amino acid biosynthesis. In Zygosaccharomyces rouxii (strain ATCC 2623 / CBS 732 / NBRC 1130 / NCYC 568 / NRRL Y-229), this protein is Pentafunctional AROM polypeptide.